Here is a 310-residue protein sequence, read N- to C-terminus: Probable manganese-dependent inorganic pyrophosphatase (310 aa).

Positions 9, 13, 15, 76, 98, and 150 each coordinate Mn(2+).

This sequence belongs to the PPase class C family. Mn(2+) serves as cofactor.

The protein localises to the cytoplasm. It catalyses the reaction diphosphate + H2O = 2 phosphate + H(+). In Streptococcus thermophilus (strain CNRZ 1066), this protein is Probable manganese-dependent inorganic pyrophosphatase.